We begin with the raw amino-acid sequence, 61 residues long: MAKKSMMERHAKEQKFKVREYNRCPLCGRSRAYLRRFDMCRLCFRDLASKAQIPGVKKSSW.

Zn(2+)-binding residues include Cys24, Cys27, Cys40, and Cys43.

This sequence belongs to the universal ribosomal protein uS14 family. Zinc-binding uS14 subfamily. In terms of assembly, part of the 30S ribosomal subunit. Contacts proteins S3 and S10. Requires Zn(2+) as cofactor.

Functionally, binds 16S rRNA, required for the assembly of 30S particles and may also be responsible for determining the conformation of the 16S rRNA at the A site. The polypeptide is Small ribosomal subunit protein uS14 (Leptospira biflexa serovar Patoc (strain Patoc 1 / Ames)).